We begin with the raw amino-acid sequence, 100 residues long: Small ribosomal subunit protein uS14c (100 aa).

It belongs to the universal ribosomal protein uS14 family. In terms of assembly, part of the 30S ribosomal subunit.

The protein resides in the plastid. The protein localises to the chloroplast. Functionally, binds 16S rRNA, required for the assembly of 30S particles. This is Small ribosomal subunit protein uS14c from Guillardia theta (Cryptophyte).